We begin with the raw amino-acid sequence, 192 residues long: Dihydrofolate reductase (192 aa).

Residues 5 to 191 form the DHFR domain; that stretch reads NVAIIVAALK…FTYNYTLWTR (187 aa). Residues Ala-11 and 18 to 24 each bind NADP(+); that span reads GIGYKGK. 32-37 lines the substrate pocket; it reads EIRYFK. Residue 56–58 participates in NADP(+) binding; sequence RKT. Arg-72 contacts substrate. 78–80 provides a ligand contact to NADP(+); the sequence is SRS. Substrate-binding residues include Ile-112 and Tyr-118. Residue 113–120 participates in NADP(+) binding; it reads GGAEIYNE.

This sequence belongs to the dihydrofolate reductase family.

It carries out the reaction (6S)-5,6,7,8-tetrahydrofolate + NADP(+) = 7,8-dihydrofolate + NADPH + H(+). It functions in the pathway cofactor biosynthesis; tetrahydrofolate biosynthesis; 5,6,7,8-tetrahydrofolate from 7,8-dihydrofolate: step 1/1. Its function is as follows. Key enzyme in folate metabolism. Catalyzes an essential reaction for de novo glycine and purine synthesis, and for DNA precursor synthesis. This chain is Dihydrofolate reductase (DFR1), found in Candida albicans (Yeast).